A 155-amino-acid polypeptide reads, in one-letter code: Photosystem II extrinsic protein V (155 aa).

The N-terminal stretch at 1–20 is a signal peptide; the sequence is MFVKMIGWLVLFLFAHQTWA. Residues cysteine 50, cysteine 53, histidine 54, and histidine 105 each contribute to the heme c site.

Belongs to the cytochrome c family. PsbV subfamily. In terms of assembly, PSII is composed of 1 copy each of membrane proteins PsbA, PsbB, PsbC, PsbD, PsbE, PsbF, PsbH, PsbI, PsbJ, PsbK, PsbL, PsbM, PsbT, PsbY, PsbZ, Psb30/Ycf12, at least 3 peripheral proteins of the oxygen-evolving complex and a large number of cofactors. It forms dimeric complexes. The extrinsic subunits in red algae are PsbO (OEC33), PsbQ', cytochrome c-550 and PsbU. Requires heme c as cofactor.

Its subcellular location is the plastid. It is found in the chloroplast thylakoid membrane. In terms of biological role, one of the extrinsic, lumenal subunits of photosystem II (PSII). PSII is a light-driven water plastoquinone oxidoreductase, using light energy to abstract electrons from H(2)O, generating a proton gradient subsequently used for ATP formation. The extrinsic proteins stabilize the structure of photosystem II oxygen-evolving complex (OEC), the ion environment of oxygen evolution and protect the OEC against heat-induced inactivation. Unlike the T.vulcanus ortholog, it does not bind by itself to PSII, but requires all extrinsic members of the OEC. The protein is Photosystem II extrinsic protein V of Cyanidium caldarium (Red alga).